Here is a 334-residue protein sequence, read N- to C-terminus: S-adenosylmethionine:tRNA ribosyltransferase-isomerase (334 aa).

The protein belongs to the QueA family. Monomer.

The protein resides in the cytoplasm. The enzyme catalyses 7-aminomethyl-7-carbaguanosine(34) in tRNA + S-adenosyl-L-methionine = epoxyqueuosine(34) in tRNA + adenine + L-methionine + 2 H(+). The protein operates within tRNA modification; tRNA-queuosine biosynthesis. Functionally, transfers and isomerizes the ribose moiety from AdoMet to the 7-aminomethyl group of 7-deazaguanine (preQ1-tRNA) to give epoxyqueuosine (oQ-tRNA). The polypeptide is S-adenosylmethionine:tRNA ribosyltransferase-isomerase (Thermosipho melanesiensis (strain DSM 12029 / CIP 104789 / BI429)).